Reading from the N-terminus, the 507-residue chain is Maturase K (507 aa).

It belongs to the intron maturase 2 family. MatK subfamily.

Its subcellular location is the plastid. It localises to the chloroplast. Its function is as follows. Usually encoded in the trnK tRNA gene intron. Probably assists in splicing its own and other chloroplast group II introns. The chain is Maturase K from Lyonia ferruginea (Rusty staggerbush).